Consider the following 283-residue polypeptide: MKQYLALCERIINEGVWVENERTGKRCLTVINADLEYDVAANEFPLITTRKSFWKGAIAELLGYLRGYDNAADFRKLGAKTWDANANENSAWLNNPHRKGHDDMGRVYGVQGRAWAKPDGGVVDQLRKIIDNLSKGVDDRGEILSFYNPGEFHMGCLRPCMHTHNFSLLGDTLYLNSFQRSCDVPLGLNFNQVQVFALLSIVAQITGHKPGKAYHKIVNAHIYEDQLPLMQEVQLKREPFPSPKLSINPDIKSLEDLETWVTMDDFEVTGYQHHEAIQYPFSV.

DUMP is bound at residue Arg-22. The active-site Nucleophile is the Cys-160. DUMP is bound by residues 180-183 (RSCD), Asn-191, and 221-223 (HIY). Asp-183 lines the (6R)-5,10-methylene-5,6,7,8-tetrahydrofolate pocket. Ser-282 is a binding site for (6R)-5,10-methylene-5,6,7,8-tetrahydrofolate.

The protein belongs to the thymidylate synthase family. Bacterial-type ThyA subfamily. Homodimer.

The protein resides in the cytoplasm. The enzyme catalyses dUMP + (6R)-5,10-methylene-5,6,7,8-tetrahydrofolate = 7,8-dihydrofolate + dTMP. It participates in pyrimidine metabolism; dTTP biosynthesis. Catalyzes the reductive methylation of 2'-deoxyuridine-5'-monophosphate (dUMP) to 2'-deoxythymidine-5'-monophosphate (dTMP) while utilizing 5,10-methylenetetrahydrofolate (mTHF) as the methyl donor and reductant in the reaction, yielding dihydrofolate (DHF) as a by-product. This enzymatic reaction provides an intracellular de novo source of dTMP, an essential precursor for DNA biosynthesis. The chain is Thymidylate synthase from Shewanella loihica (strain ATCC BAA-1088 / PV-4).